Reading from the N-terminus, the 539-residue chain is Probable 1,4-beta-D-glucan cellobiohydrolase B (539 aa).

The signal sequence occupies residues 1-26 (MLPSTISYRIYKNALFFAALFGAVQA). Positions 27-461 (QKVGTSKAEV…SNIKVGPIGS (435 aa)) are catalytic. Asn-90 is a glycosylation site (N-linked (GlcNAc...) asparagine). The active-site Nucleophile is the Glu-238. Glu-243 (proton donor) is an active-site residue. Residues Asn-296 and Asn-495 are each glycosylated (N-linked (GlcNAc...) asparagine). The tract at residues 462 to 503 (TFNSGGSNPGGSTTTTKPATSTTTTKATTTATTNTTGPTGTG) is thr-rich linker. A compositionally biased stretch (low complexity) spans 462–503 (TFNSGGSNPGGSTTTTKPATSTTTTKATTTATTNTTGPTGTG). Residues 462-504 (TFNSGGSNPGGSTTTTKPATSTTTTKATTTATTNTTGPTGTGV) form a disordered region. One can recognise a CBM1 domain in the interval 503–539 (GVAQPWAQCGGIGYSGPTQCAAPYTCTKQNDYYSQCL). 2 disulfides stabilise this stretch: Cys-511/Cys-528 and Cys-522/Cys-538.

The protein belongs to the glycosyl hydrolase 7 (cellulase C) family.

The protein resides in the secreted. The enzyme catalyses Hydrolysis of (1-&gt;4)-beta-D-glucosidic linkages in cellulose and cellotetraose, releasing cellobiose from the non-reducing ends of the chains.. Functionally, the biological conversion of cellulose to glucose generally requires three types of hydrolytic enzymes: (1) Endoglucanases which cut internal beta-1,4-glucosidic bonds; (2) Exocellobiohydrolases that cut the disaccharide cellobiose from the non-reducing end of the cellulose polymer chain; (3) Beta-1,4-glucosidases which hydrolyze the cellobiose and other short cello-oligosaccharides to glucose. This is Probable 1,4-beta-D-glucan cellobiohydrolase B (cbhB) from Aspergillus clavatus (strain ATCC 1007 / CBS 513.65 / DSM 816 / NCTC 3887 / NRRL 1 / QM 1276 / 107).